The following is a 434-amino-acid chain: MGHFMSIRVLTGITTSGTPHLGNYVGAIRPAIRAAGAPGTESFYFLADLHSLIKVQDPERTQRSTLEIAATWLACGLDPEKVWLYRQSDVPEITELMWLLTCVAGKGILNRAHAYKAVVDKNRSEGGDDDAGITAGLFMYPVLMAADILLFNAHQVPVGRDQIQHIEMARDFAQRFNHIYGGEYFVLPEAAIDEQVATLPGLDGRKMSKSYGNTMPLFCTREELKKYVFSIVTDSRAPGEPKEAVGSAVFQLYQAFAGVEECSMFAQALAEGLGWGEAKVRLFERIDAEVAPLRERYEDFMRRPADIEAMLCDSAGRLRERDAIPLLARLREAVGLRSLSLCMASAVPVPQEKVALPVLKQYREQDGRFYFKLIDGQGAVLVQSRGFASPRDAGQWIALFKQAVSAEALVSPMLEPVADPVVVLAALRRLREAG.

Residues 14-16 and 22-23 each bind ATP; these read TTS and GN. The 'HIGH' region signature appears at 15-23; it reads TSGTPHLGN. L-tryptophan is bound at residue Asp-147. Residues 159–161, Leu-199, and 206–210 each bind ATP; these read GRD and KMSKS. A 'KMSKS' region motif is present at residues 206 to 210; that stretch reads KMSKS.

Belongs to the class-I aminoacyl-tRNA synthetase family. As to quaternary structure, homodimer.

Its subcellular location is the cytoplasm. It carries out the reaction tRNA(Trp) + L-tryptophan + ATP = L-tryptophyl-tRNA(Trp) + AMP + diphosphate + H(+). In terms of biological role, catalyzes the attachment of tryptophan to tRNA(Trp). The chain is Tryptophan--tRNA ligase from Xylella fastidiosa (strain 9a5c).